A 111-amino-acid polypeptide reads, in one-letter code: Ribosome-binding factor A (111 aa).

The protein belongs to the RbfA family. In terms of assembly, monomer. Binds 30S ribosomal subunits, but not 50S ribosomal subunits or 70S ribosomes.

Its subcellular location is the cytoplasm. Functionally, one of several proteins that assist in the late maturation steps of the functional core of the 30S ribosomal subunit. Associates with free 30S ribosomal subunits (but not with 30S subunits that are part of 70S ribosomes or polysomes). Required for efficient processing of 16S rRNA. May interact with the 5'-terminal helix region of 16S rRNA. This is Ribosome-binding factor A from Helicobacter pylori (strain G27).